A 227-amino-acid polypeptide reads, in one-letter code: PKHD-type hydroxylase CC_0027 (227 aa).

The Fe2OG dioxygenase domain occupies T78–S178. Fe cation is bound by residues H96, D98, and H159. Position 169 (R169) interacts with 2-oxoglutarate.

Fe(2+) serves as cofactor. Requires L-ascorbate as cofactor.

In Caulobacter vibrioides (strain ATCC 19089 / CIP 103742 / CB 15) (Caulobacter crescentus), this protein is PKHD-type hydroxylase CC_0027.